Consider the following 293-residue polypeptide: 1D-myo-inositol 2-acetamido-2-deoxy-alpha-D-glucopyranoside deacetylase (293 aa).

Zn(2+)-binding residues include His-15, Asp-18, and His-148.

The protein belongs to the MshB deacetylase family. Zn(2+) serves as cofactor.

It carries out the reaction 1D-myo-inositol 2-acetamido-2-deoxy-alpha-D-glucopyranoside + H2O = 1D-myo-inositol 2-amino-2-deoxy-alpha-D-glucopyranoside + acetate. Its function is as follows. Catalyzes the deacetylation of 1D-myo-inositol 2-acetamido-2-deoxy-alpha-D-glucopyranoside (GlcNAc-Ins) in the mycothiol biosynthesis pathway. In Corynebacterium diphtheriae (strain ATCC 700971 / NCTC 13129 / Biotype gravis), this protein is 1D-myo-inositol 2-acetamido-2-deoxy-alpha-D-glucopyranoside deacetylase.